We begin with the raw amino-acid sequence, 367 residues long: MSQNQTTIAPQPGIMEISLYEGGASKVAGVENVVKLSSNENPFGPSDKAREAMIRAAHGLHRYPNTDHAGLRGAIGEVHGLDPDRIICGVGSDEIIHFLCQAYAGPGTEVLFTEHGFLMYRISAHAAGAIPVQVAERDRVTDIDALIAGATPRTRLIFVANPNNPTGTMVGLPELERLARAVPQAILVVDAAYAEYVGDYDGGAELATRLPNVFMTRTFSKIYGLGGLRVGWGYGPREIVDVLNRIRGPFNLSNVALEGAEAAMRDREHIARCQAENARMRAWLAEALAEKGVPSDTSCANFILARFADAETAGACDEYLKTQGLIVRRVAGYGLPHCLRITIGDEASCRRVAHVIGQYMAERAESR.

Lys221 carries the N6-(pyridoxal phosphate)lysine modification.

Belongs to the class-II pyridoxal-phosphate-dependent aminotransferase family. Histidinol-phosphate aminotransferase subfamily. In terms of assembly, homodimer. Requires pyridoxal 5'-phosphate as cofactor.

The catalysed reaction is L-histidinol phosphate + 2-oxoglutarate = 3-(imidazol-4-yl)-2-oxopropyl phosphate + L-glutamate. It functions in the pathway amino-acid biosynthesis; L-histidine biosynthesis; L-histidine from 5-phospho-alpha-D-ribose 1-diphosphate: step 7/9. The polypeptide is Histidinol-phosphate aminotransferase (Paracoccus denitrificans (strain Pd 1222)).